We begin with the raw amino-acid sequence, 1498 residues long: ATP-binding cassette sub-family C member 6 (1498 aa).

The Extracellular segment spans residues 1–37 (MNRGRSMATPGEQCAGLRVWNQTEQEPAAYHLLSLCF). An N-linked (GlcNAc...) asparagine glycan is attached at Asn-21. A helical membrane pass occupies residues 38–58 (VRAASSWVPPMYLWVLGPIYL). The Cytoplasmic portion of the chain corresponds to 59 to 78 (LYIHRHGRCYLRMSHLFKTK). Residues 79–99 (MVLGLALILLYTFNVAVPLWR) form a helical membrane-spanning segment. At 100-104 (IHQGV) the chain is on the extracellular side. The helical transmembrane segment at 105 to 125 (PQAPELLIHPTVWLTTMSFAT) threads the bilayer. Residues 126–137 (FLIHMERRKGVR) are Cytoplasmic-facing. The chain crosses the membrane as a helical span at residues 138–155 (SSGVLFGYWLLCCILPGI). Topologically, residues 156-173 (NTVQQASAGNFRQEPLHH) are extracellular. Residues 174 to 194 (LATYLCLSLVVAELVLSCLVD) traverse the membrane as a helical segment. Residues 195-300 (QPPFFSEDSQ…RSQRGPLLRA (106 aa)) are Cytoplasmic-facing. Residues 301–321 (IWRVFRSTFLLGTLSLVISDA) form a helical membrane-spanning segment. An ABC transmembrane type-1 1 domain is found at 309-592 (FLLGTLSLVI…LPFSVHCIVQ (284 aa)). The Extracellular portion of the chain corresponds to 322–347 (FRFAVPKLLSLFLEFMGDRNSSAWTG). A glycan (N-linked (GlcNAc...) asparagine) is linked at Asn-341. Residues 348 to 368 (WLLAVLMFAAACLQTLFEQQH) form a helical membrane-spanning segment. At 369 to 424 (MYRAKVLQMRLRTAITGLVYRKVLVLSSGSRKSSAAGDVVNLVSVDIQRLAESIIY) the chain is on the cytoplasmic side. A helical membrane pass occupies residues 425-445 (LNGLWLLFLWIFVCFVYLWQL). Residues 446-448 (LGP) lie on the Extracellular side of the membrane. A helical membrane pass occupies residues 449-469 (SALTAVAVFLSLLPLNFFITK). Residues 470–531 (KRGFHQEEQM…ALKTSTLLFS (62 aa)) are Cytoplasmic-facing. Residues 532 to 552 (VSLVSFQVSTFLVALVVFAVH) traverse the membrane as a helical segment. Residues 553-574 (TLVAEDNAMDAEKAFVTLTVLS) are Extracellular-facing. Residues 575–595 (ILNKAQAFLPFSVHCIVQARV) form a helical membrane-spanning segment. The Cytoplasmic portion of the chain corresponds to 596–934 (SFDRLAAFLC…VKTTIYLSYL (339 aa)). Residues 627–851 (ISVHNGTFAW…NGALVGLLDG (225 aa)) form the ABC transporter 1 domain. Residue 661–668 (GPVGAGKS) coordinates ATP. A disordered region spans residues 855–910 (PAGTHDAATSDDLGGFPGGGRPTCRPDRPRPTEAAPVKGRSTSEVQMEASLDDPEA). A helical transmembrane segment spans residues 935–955 (RAVGTPLCTYTLFLFLCQQVA). An ABC transmembrane type-1 2 domain is found at 942 to 1223 (CTYTLFLFLC…VVRSWTDLEN (282 aa)). Residues 956-992 (SFSQGYWLSLWADDPVVDGRQMHAALRGWVFGLLGCL) lie on the Extracellular side of the membrane. A helical membrane pass occupies residues 993 to 1013 (QAIGLFASMAAVFLGGARASG). At 1014 to 1056 (LLFRSLLWDVARSPIGFFERTPVGNLLNRFSKETDTVDVDIPD) the chain is on the cytoplasmic side. The chain crosses the membrane as a helical span at residues 1057 to 1077 (KLRSLLTYAFGLLEVGLAVTM). Position 1078 (Ala-1078) is a topological domain, extracellular. A helical membrane pass occupies residues 1079–1099 (TPLAIVAILPLMVLYAGFQSL). Residues 1100-1170 (YVATSCQLRR…VADRWLATNL (71 aa)) lie on the Cytoplasmic side of the membrane. The helical transmembrane segment at 1171-1191 (ELLGNGLVFVAATCAVLSKAH) threads the bilayer. Topologically, residues 1192–1193 (LS) are extracellular. The chain crosses the membrane as a helical span at residues 1194–1214 (AGLVGFSVSAALQVTQTLQWV). Residues 1215–1498 (VRSWTDLENS…YRLAHESGLA (284 aa)) lie on the Cytoplasmic side of the membrane. The 235-residue stretch at 1260–1494 (IEFRDFGLRH…KGLFYRLAHE (235 aa)) folds into the ABC transporter 2 domain. A Phosphoserine modification is found at Ser-1281. 1294–1301 (GRTGAGKS) contributes to the ATP binding site.

It belongs to the ABC transporter superfamily. ABCC family. Conjugate transporter (TC 3.A.1.208) subfamily. Post-translationally, glycosylated.

The protein resides in the basolateral cell membrane. It localises to the basal cell membrane. It carries out the reaction an S-substituted glutathione(in) + ATP + H2O = an S-substituted glutathione(out) + ADP + phosphate + H(+). The enzyme catalyses leukotriene C4(in) + ATP + H2O = leukotriene C4(out) + ADP + phosphate + H(+). In terms of biological role, ATP-dependent transporter of the ATP-binding cassette (ABC) family that actively extrudes physiological compounds, and xenobiotics from cells. Mediates ATP-dependent transport of glutathione conjugates such as leukotriene-c4 (LTC4) and N-ethylmaleimide S-glutathione (NEM-GS) (in vitro), and an anionic cyclopentapeptide endothelin antagonist, BQ-123. May contribute to regulate the transport of organic compounds in testes across the blood-testis-barrier. Functionally, mediates the release of nucleoside triphosphates, predominantly ATP, into the circulation, where it is rapidly converted into AMP and the mineralization inhibitor inorganic pyrophosphate (PPi) by the ecto-enzyme ectonucleotide pyrophosphatase phosphodiesterase 1 (ENPP1), therefore playing a role in PPi homeostasis. The sequence is that of ATP-binding cassette sub-family C member 6 (Abcc6) from Mus musculus (Mouse).